The following is a 366-amino-acid chain: Phospho-N-acetylmuramoyl-pentapeptide-transferase (366 aa).

10 helical membrane passes run 27–47, 76–96, 101–121, 136–156, 176–196, 205–225, 241–261, 264–284, 285–305, and 343–363; these read GAAI…ISLL, PTMG…IWVI, FFWL…WDDF, IKLL…LADP, IDIG…SSNA, GLAA…SYIS, GAGE…GFLW, CYPA…SALG, VVAI…IFVI, and AVTV…LSSL.

This sequence belongs to the glycosyltransferase 4 family. MraY subfamily. Requires Mg(2+) as cofactor.

The protein localises to the cell inner membrane. The enzyme catalyses UDP-N-acetyl-alpha-D-muramoyl-L-alanyl-gamma-D-glutamyl-meso-2,6-diaminopimeloyl-D-alanyl-D-alanine + di-trans,octa-cis-undecaprenyl phosphate = di-trans,octa-cis-undecaprenyl diphospho-N-acetyl-alpha-D-muramoyl-L-alanyl-D-glutamyl-meso-2,6-diaminopimeloyl-D-alanyl-D-alanine + UMP. It functions in the pathway cell wall biogenesis; peptidoglycan biosynthesis. In terms of biological role, catalyzes the initial step of the lipid cycle reactions in the biosynthesis of the cell wall peptidoglycan: transfers peptidoglycan precursor phospho-MurNAc-pentapeptide from UDP-MurNAc-pentapeptide onto the lipid carrier undecaprenyl phosphate, yielding undecaprenyl-pyrophosphoryl-MurNAc-pentapeptide, known as lipid I. The chain is Phospho-N-acetylmuramoyl-pentapeptide-transferase from Methylacidiphilum infernorum (isolate V4) (Methylokorus infernorum (strain V4)).